Reading from the N-terminus, the 307-residue chain is MTTTTLLSESTNNSNNTNNNTNNNTNNTMNNNNNNNNNNTIGNNNNNNPEYDILINILMLGDEEVGKGSVARRYTEGYFPINENLYNIEVDRKHKDIKDWGDGLIKRKDPNKPVIGRLQLWNFHMHKISDIPTKQQYRETNGFILFFDVTNKSSFLQLSSLIELVRAKCADENNNFNCQSNSRNSTNYNRHSVGNHCPNSPQKGEKENNTHSSTAPPAPPPLPPIVIVGNKCDDVSNTVVDPIAAKKYCDSLSIPLLFISAKTNENVNEAFNILQGLIIKQMKIKERERQKLLKQKHIKKDVNCNLM.

Positions 1 to 10 (MTTTTLLSES) are enriched in polar residues. Residues 1–45 (MTTTTLLSESTNNSNNTNNNTNNNTNNTMNNNNNNNNNNTIGNNN) are disordered. The segment covering 11–45 (TNNSNNTNNNTNNNTNNTMNNNNNNNNNNTIGNNN) has biased composition (low complexity). 61–68 (GDEEVGKG) is a GTP binding site. An Effector region motif is present at residues 83 to 92 (ENLYNIEVDR). 122 to 126 (NFHMH) contacts GTP. A compositionally biased stretch (low complexity) spans 175-185 (NFNCQSNSRNS). Residues 175–223 (NFNCQSNSRNSTNYNRHSVGNHCPNSPQKGEKENNTHSSTAPPAPPPLP) are disordered. Residues 186 to 202 (TNYNRHSVGNHCPNSPQ) are compositionally biased toward polar residues. 230–233 (NKCD) is a GTP binding site. Residue C304 is modified to Cysteine methyl ester. C304 carries the S-geranylgeranyl cysteine lipid modification. Positions 305–307 (NLM) are cleaved as a propeptide — removed in mature form.

It belongs to the small GTPase superfamily. Rab family.

It localises to the cell membrane. This is Ras-related protein RabR (rabR) from Dictyostelium discoideum (Social amoeba).